The sequence spans 760 residues: Striatin-4 (760 aa).

Residues 1-65 (MMEERAAAAV…PTAGPEPLSL (65 aa)) form a disordered region. A compositionally biased stretch (low complexity) spans 7–35 (AAAVASAASSCRPLGSGTAPNPTAAAPAS). Residues 43–54 (PVGKGGGGGGSP) show a composition bias toward gly residues. Serine 53 carries the post-translational modification Phosphoserine. Positions 69-136 (LHFIQHEWAR…QERAKYHKLK (68 aa)) form a coiled coil. The interval 71 to 79 (FIQHEWARF) is caveolin-binding. The calmodulin-binding stretch occupies residues 165–182 (ENSPLVWKEGRQLLRQYL). 3 positions are modified to phosphoserine: serine 206, serine 223, and serine 276. Disordered regions lie at residues 210 to 233 (NGAG…SGGE) and 272 to 346 (EDED…PHEL). Acidic residues-rich tracts occupy residues 272-283 (EDEDSDEDDELD) and 302-317 (EMED…DAIN). Over residues 332–346 (PDPRRCTSEGNPHEL) the composition is skewed to basic and acidic residues. 7 WD repeats span residues 443–482 (SHYD…TAKK), 496–535 (AHRG…MDPY), 549–588 (GHGD…PSCL), 595–635 (GEHG…ALLT), 642–681 (SGPA…SVHS), 684–723 (AHLD…CVQE), and 730–759 (KHEE…AKVF).

Belongs to the WD repeat striatin family. In terms of assembly, part of the core of STRIPAK complexes composed of PP2A catalytic and scaffolding subunits, the striatins (PP2A regulatory subunits), the striatin-associated proteins MOB4, STRIP1 and STRIP2, PDCD10 and members of the STE20 kinases, such as STK24 and STK26. Interacts with CTTNBP2NL. Mainly expressed in brain but is also expressed at low levels in the kidney.

The protein localises to the cytoplasm. It localises to the membrane. The protein resides in the cell projection. Its subcellular location is the dendritic spine. Its function is as follows. Calmodulin-binding scaffolding protein which is the center of the striatin-interacting phosphatase and kinase (STRIPAK) complexes. STRIPAK complexes have critical roles in protein (de)phosphorylation and are regulators of multiple signaling pathways including Hippo, MAPK, nuclear receptor and cytoskeleton remodeling. Different types of STRIPAK complexes are involved in a variety of biological processes such as cell growth, differentiation, apoptosis, metabolism and immune regulation. Key regulator of the expanded Hippo signaling pathway by interacting and allowing the inhibition of MAP4K kinases by the STRIPAK complex. The protein is Striatin-4 (Strn4) of Mus musculus (Mouse).